The sequence spans 177 residues: Putative pre-16S rRNA nuclease (177 aa).

The protein belongs to the YqgF nuclease family.

It localises to the cytoplasm. Could be a nuclease involved in processing of the 5'-end of pre-16S rRNA. The protein is Putative pre-16S rRNA nuclease of Psychrobacter arcticus (strain DSM 17307 / VKM B-2377 / 273-4).